A 718-amino-acid polypeptide reads, in one-letter code: Peroxisomal bifunctional enzyme (718 aa).

Residues 1–280 (MAEYLRLPHS…FAEKSANKWS (280 aa)) are enoyl-CoA hydratase / isomerase. Lysine 38 is subject to N6-succinyllysine. Glycine 99 provides a ligand contact to substrate. Residues lysine 163 and lysine 172 each carry the N6-acetyllysine; alternate modification. N6-succinyllysine; alternate is present on residues lysine 163 and lysine 172. Lysine 181 carries the N6-succinyllysine modification. 2 positions are modified to N6-acetyllysine; alternate: lysine 189 and lysine 217. N6-succinyllysine; alternate occurs at positions 189 and 217. N6-succinyllysine is present on lysine 240. At lysine 248 the chain carries N6-acetyllysine. Lysine 252 carries the N6-succinyllysine modification. Position 274 is an N6-acetyllysine; alternate (lysine 274). Residue lysine 274 is modified to N6-succinyllysine; alternate. Residues lysine 278, lysine 288, and lysine 329 each carry the N6-succinyllysine modification. The 3-hydroxyacyl-CoA dehydrogenase stretch occupies residues 281 to 567 (TPSGASWKTA…DMLCEAGRFG (287 aa)). Residues lysine 344, lysine 348, lysine 355, and lysine 459 each carry the N6-acetyllysine modification. Lysine 527 carries the post-translational modification N6-succinyllysine. Threonine 543 is modified (phosphothreonine). The residue at position 572 (lysine 572) is an N6-succinyllysine. N6-acetyllysine; alternate occurs at positions 579, 586, and 705. An N6-succinyllysine; alternate mark is found at lysine 579, lysine 586, and lysine 705. Residues 716-718 (SKL) carry the Microbody targeting signal motif. The residue at position 717 (lysine 717) is an N6-succinyllysine.

In the N-terminal section; belongs to the enoyl-CoA hydratase/isomerase family. It in the C-terminal section; belongs to the 3-hydroxyacyl-CoA dehydrogenase family. As to quaternary structure, monomer. In terms of processing, acetylated, leading to enhanced enzyme activity. Acetylation is enhanced by up to 80% after treatment either with trichostin A (TCA) or with nicotinamide (NAM) with highest increase on Lys-344. Acetylation and enzyme activity increased by about 1.5% on addition of fatty acids.

It is found in the peroxisome. The enzyme catalyses a (3S)-3-hydroxyacyl-CoA = a (2E)-enoyl-CoA + H2O. The catalysed reaction is a 4-saturated-(3S)-3-hydroxyacyl-CoA = a (3E)-enoyl-CoA + H2O. It carries out the reaction a (3Z)-enoyl-CoA = a 4-saturated (2E)-enoyl-CoA. It catalyses the reaction a (3E)-enoyl-CoA = a 4-saturated (2E)-enoyl-CoA. The enzyme catalyses a (3S)-3-hydroxyacyl-CoA + NAD(+) = a 3-oxoacyl-CoA + NADH + H(+). The catalysed reaction is (2S,3S)-3-hydroxy-2-methylbutanoyl-CoA = (2E)-2-methylbut-2-enoyl-CoA + H2O. It carries out the reaction (2E)-dodecenedioyl-CoA + H2O = (3S)-hydroxydodecanedioyl-CoA. It catalyses the reaction (3S)-hydroxydodecanedioyl-CoA + NAD(+) = 3-oxododecanedioyl-CoA + NADH + H(+). The enzyme catalyses (2E)-octenedioyl-CoA + H2O = (3S)-hydroxyoctanedioyl-CoA. The catalysed reaction is (3S)-hydroxyoctanedioyl-CoA + NAD(+) = 3-oxooctanedioyl-CoA + NADH + H(+). It carries out the reaction (2E)-decenedioyl-CoA + H2O = (3S)-hydroxydecanedioyl-CoA. It catalyses the reaction (3S)-hydroxydecanedioyl-CoA + NAD(+) = 3-oxodecanedioyl-CoA + NADH + H(+). The enzyme catalyses (2E)-tetradecenedioyl-CoA + H2O = (3S)-hydroxytetradecanedioyl-CoA. The catalysed reaction is (3S)-hydroxytetradecanedioyl-CoA + NAD(+) = 3-oxotetradecanedioyl-CoA + NADH + H(+). It carries out the reaction (3E,5Z)-tetradecadienoyl-CoA = (2E,5Z)-tetradecadienoyl-CoA. It catalyses the reaction (3E,5Z)-octadienoyl-CoA = (2E,5Z)-octadienoyl-CoA. The enzyme catalyses (3S)-hydroxydecanoyl-CoA + NAD(+) = 3-oxodecanoyl-CoA + NADH + H(+). The catalysed reaction is (3E)-decenoyl-CoA = (2E)-decenoyl-CoA. It carries out the reaction (3Z)-hexenoyl-CoA = (2E)-hexenoyl-CoA. It catalyses the reaction (3E)-hexenoyl-CoA = (2E)-hexenoyl-CoA. The enzyme catalyses (3S)-hydroxydecanoyl-CoA = (2E)-decenoyl-CoA + H2O. The catalysed reaction is (3S)-hydroxyhexanoyl-CoA = (2E)-hexenoyl-CoA + H2O. It carries out the reaction (3S)-hydroxyhexadecanoyl-CoA + NAD(+) = 3-oxohexadecanoyl-CoA + NADH + H(+). It catalyses the reaction (3S)-hydroxyhexadecanoyl-CoA = (2E)-hexadecenoyl-CoA + H2O. The enzyme catalyses (2E)-hexadecenedioyl-CoA + H2O = (3S)-hydroxyhexadecanedioyl-CoA. The catalysed reaction is (3S)-hydroxyhexadecanedioyl-CoA + NAD(+) = 3-oxohexadecanedioyl-CoA + NADH + H(+). The protein operates within lipid metabolism; fatty acid beta-oxidation. With respect to regulation, enzyme activity enhanced by acetylation. Peroxisomal trifunctional enzyme possessing 2-enoyl-CoA hydratase, 3-hydroxyacyl-CoA dehydrogenase, and delta 3, delta 2-enoyl-CoA isomerase activities. Catalyzes two of the four reactions of the long chain fatty acids peroxisomal beta-oxidation pathway. Can also use branched-chain fatty acids such as 2-methyl-2E-butenoyl-CoA as a substrate, which is hydrated into (2S,3S)-3-hydroxy-2-methylbutanoyl-CoA. Optimal isomerase for 2,5 double bonds into 3,5 form isomerization in a range of enoyl-CoA species. Also able to isomerize both 3-cis and 3-trans double bonds into the 2-trans form in a range of enoyl-CoA species. With HSD17B4, catalyzes the hydration of trans-2-enoyl-CoA and the dehydrogenation of 3-hydroxyacyl-CoA, but with opposite chiral specificity. Regulates the amount of medium-chain dicarboxylic fatty acids which are essential regulators of all fatty acid oxidation pathways. Also involved in the degradation of long-chain dicarboxylic acids through peroxisomal beta-oxidation. The polypeptide is Peroxisomal bifunctional enzyme (Mus musculus (Mouse)).